A 44-amino-acid polypeptide reads, in one-letter code: Antifungal protein R (44 aa).

The protein belongs to the thaumatin family.

In terms of biological role, has antifungal activity. Inhibits the growth of Trichoderma viridae and Candida albicans. The protein is Antifungal protein R of Hordeum vulgare (Barley).